Here is a 477-residue protein sequence, read N- to C-terminus: Cytochrome P450 monooxygenase poxC (477 aa).

The helical transmembrane segment at 24–41 threads the bilayer; sequence AWHFAVLSFVYVIARSIY. Cys420 is a heme binding site.

The protein belongs to the cytochrome P450 family. Requires heme as cofactor.

It is found in the membrane. It functions in the pathway secondary metabolite biosynthesis. Cytochrome P450 monooxygenase; part of the gene cluster that mediates the biosynthesis of oxaleimides, cytotoxic compounds containing an unusual disubstituted succinimide moiety. The first step of the pathway is provided by the HR-PKS poxF that serves in a new mode of collaborative biosynthesis with the PKS-NRPS poxE, by providing the olefin containing amino acid substrate via the synthesis of an ACP-bound dec-4-enoate. The cytochrome P450 monooxygenase poxM-catalyzed oxidation at the alpha-position creates the enzyme-bound 2-hydroxydec-4-enoyl-ACP thioester, which may be prone to spontaneous hydrolysis to yield 2-hydroxydec-4-enoic acid due to increased electrophilicity of the carbonyl. 2-hydroxydec-4-enoic acid can then be further oxidized by poxM to yield the alpha-ketoacid 2-oxodec-4-enoicacid, which is reductively aminated by the aminotransferase poxL to yield (S,E)-2-aminodec-4-enoic acid. The Hybrid PKS-NRPS synthetase poxE then performs condensation between the octaketide product of its PKS modules and the amino group of (S,E)-2-aminodec-4-enoic acid which is activated and incorporated by the adenylation domain. The resulting aminoacyl product can be cyclized by the Diels-Alderase PoxQ and reductively released by the reductive (R) domain of poxE to yield an aldehyde intermediate. The released aldehyde is then substrate for a Knoevenagel condensation by the hydrolyase poxO followed by an oxidation at the 5-position of the pyrrolidone ring. The presence of the olefin from the amino acid building block allows for migration of the substituted allyl group to occur. This allylic transposition reaction takes place in a conjugate addition, semipinacol-like fashion to yield a succinimide intermediate. Iterative two-electron oxidations of the C7 methyl of the succinimide intermediate to the carboxylic acid can be catalyzed by one of two remaining cytochrome P450 monooxygenasess poxC or poxD to yield oxaleimide A. Subsequent oxidation yields the maleimide scaffold oxaleimide I. Both oxaleimide A and oxaleimide I can undergo oxidative modifications in the decalin ring to yield the series of products oxaleimides B to H. This Penicillium oxalicum (strain 114-2 / CGMCC 5302) (Penicillium decumbens) protein is Cytochrome P450 monooxygenase poxC.